Consider the following 276-residue polypeptide: Formamidopyrimidine-DNA glycosylase (276 aa).

Catalysis depends on P2, which acts as the Schiff-base intermediate with DNA. Catalysis depends on E3, which acts as the Proton donor. K60 acts as the Proton donor; for beta-elimination activity in catalysis. H93 and R112 together coordinate DNA. An FPG-type zinc finger spans residues N240–P274. R264 serves as the catalytic Proton donor; for delta-elimination activity.

It belongs to the FPG family. As to quaternary structure, monomer. Zn(2+) serves as cofactor.

It carries out the reaction Hydrolysis of DNA containing ring-opened 7-methylguanine residues, releasing 2,6-diamino-4-hydroxy-5-(N-methyl)formamidopyrimidine.. The enzyme catalyses 2'-deoxyribonucleotide-(2'-deoxyribose 5'-phosphate)-2'-deoxyribonucleotide-DNA = a 3'-end 2'-deoxyribonucleotide-(2,3-dehydro-2,3-deoxyribose 5'-phosphate)-DNA + a 5'-end 5'-phospho-2'-deoxyribonucleoside-DNA + H(+). Functionally, involved in base excision repair of DNA damaged by oxidation or by mutagenic agents. Acts as a DNA glycosylase that recognizes and removes damaged bases. Has a preference for oxidized purines, such as 7,8-dihydro-8-oxoguanine (8-oxoG). Has AP (apurinic/apyrimidinic) lyase activity and introduces nicks in the DNA strand. Cleaves the DNA backbone by beta-delta elimination to generate a single-strand break at the site of the removed base with both 3'- and 5'-phosphates. The sequence is that of Formamidopyrimidine-DNA glycosylase from Bacillus cereus (strain ATCC 14579 / DSM 31 / CCUG 7414 / JCM 2152 / NBRC 15305 / NCIMB 9373 / NCTC 2599 / NRRL B-3711).